Here is a 79-residue protein sequence, read N- to C-terminus: Conotoxin Kt6.1 (79 aa).

Positions 1 to 22 (MKLTCVLIISVLFLTASQLITA) are cleaved as a signal peptide. Positions 23-47 (VYSRDKQQYRAARLRDEMRNLKGAR) are excised as a propeptide. Intrachain disulfides connect Cys49/Cys62, Cys56/Cys67, and Cys61/Cys77. Residues Pro60 and Pro63 each carry the 4-hydroxyproline modification.

It belongs to the conotoxin O1 superfamily. Expressed by the venom duct.

It localises to the secreted. In terms of biological role, ion channel inhibitor that inhibits the increase in intracellular calcium upon depolarization in DRG neurons. In vivo, both intraperitoneal and intracranial injections into mice induce hyperactivity. In Conus kintoki (Cone snail), this protein is Conotoxin Kt6.1.